The sequence spans 850 residues: Adenylate cyclase (850 aa).

The tract at residues 1-535 (MYLYIETLKQ…DISHHFPLRL (535 aa)) is catalytic. Residues 541 to 850 (KALYSPCEIR…SLPTKQCQLH (310 aa)) form a regulatory region.

Belongs to the adenylyl cyclase class-1 family.

It is found in the cytoplasm. The enzyme catalyses ATP = 3',5'-cyclic AMP + diphosphate. The regulatory domain is involved in the regulation of cyclase activity by the carbon source. In Yersinia pestis, this protein is Adenylate cyclase (cya).